The chain runs to 467 residues: Ribulose bisphosphate carboxylase large chain (467 aa).

Residues Xaa-106 and Thr-156 each coordinate substrate. Residue Lys-158 is the Proton acceptor of the active site. Residue Lys-160 coordinates substrate. Positions 184, 186, and 187 each coordinate Mg(2+). The residue at position 184 (Lys-184) is an N6-carboxylysine. The Proton acceptor role is filled by His-276. Residues Arg-277, His-309, and Ser-361 each contribute to the substrate site.

It belongs to the RuBisCO large chain family. Type I subfamily. In terms of assembly, heterohexadecamer of 8 large chains and 8 small chains. It depends on Mg(2+) as a cofactor.

It localises to the plastid. The protein localises to the chloroplast. It carries out the reaction 2 (2R)-3-phosphoglycerate + 2 H(+) = D-ribulose 1,5-bisphosphate + CO2 + H2O. It catalyses the reaction D-ribulose 1,5-bisphosphate + O2 = 2-phosphoglycolate + (2R)-3-phosphoglycerate + 2 H(+). In terms of biological role, ruBisCO catalyzes two reactions: the carboxylation of D-ribulose 1,5-bisphosphate, the primary event in carbon dioxide fixation, as well as the oxidative fragmentation of the pentose substrate in the photorespiration process. Both reactions occur simultaneously and in competition at the same active site. The protein is Ribulose bisphosphate carboxylase large chain (rbcL) of Chondrus crispus (Carrageen Irish moss).